A 239-amino-acid polypeptide reads, in one-letter code: MNLYEYLLEGVRHFTLIDPDKSVDYLKIAKYALEAGTDGILIGGSLGIRESQIAQVVKDIKNISNVPVVLFPGSLTQLTDLADGVLFLSVLNSLDPYFIIGAQIQGAVLIAKHYPRLEVISTAYIIVGDGGAAGFVSMSKPIPYTRPDIAAAYALAANYIGFKAVYLEAGSGASQPVPPEMVRAVRRAFPRVLIVGGGIKSGEIARAIARERPNVIVTGTLAEESPEKLGEIVRAIKQA.

Mg(2+)-binding residues include Asp-18 and Ser-45. Sn-glycerol 1-phosphate contacts are provided by residues 166 to 172 (YLEAGSG), 197 to 198 (GG), and 219 to 220 (GT).

It belongs to the GGGP/HepGP synthase family. Group II subfamily. Requires Mg(2+) as cofactor.

The protein localises to the cytoplasm. The enzyme catalyses sn-glycerol 1-phosphate + (2E,6E,10E)-geranylgeranyl diphosphate = sn-3-O-(geranylgeranyl)glycerol 1-phosphate + diphosphate. Its pathway is membrane lipid metabolism; glycerophospholipid metabolism. Functionally, prenyltransferase that catalyzes the transfer of the geranylgeranyl moiety of geranylgeranyl diphosphate (GGPP) to the C3 hydroxyl of sn-glycerol-1-phosphate (G1P). This reaction is the first ether-bond-formation step in the biosynthesis of archaeal membrane lipids. The polypeptide is Geranylgeranylglyceryl phosphate synthase (Pyrobaculum aerophilum (strain ATCC 51768 / DSM 7523 / JCM 9630 / CIP 104966 / NBRC 100827 / IM2)).